A 232-amino-acid polypeptide reads, in one-letter code: Orotate phosphoribosyltransferase (232 aa).

Residues R107, K108, K111, and 133–141 (EDLTTDGGS) each bind 5-phospho-alpha-D-ribose 1-diphosphate. T137 contributes to the orotate binding site.

It belongs to the purine/pyrimidine phosphoribosyltransferase family. PyrE subfamily. As to quaternary structure, homodimer. It depends on Mg(2+) as a cofactor.

It catalyses the reaction orotidine 5'-phosphate + diphosphate = orotate + 5-phospho-alpha-D-ribose 1-diphosphate. It participates in pyrimidine metabolism; UMP biosynthesis via de novo pathway; UMP from orotate: step 1/2. In terms of biological role, catalyzes the transfer of a ribosyl phosphate group from 5-phosphoribose 1-diphosphate to orotate, leading to the formation of orotidine monophosphate (OMP). The polypeptide is Orotate phosphoribosyltransferase (Cereibacter sphaeroides (strain KD131 / KCTC 12085) (Rhodobacter sphaeroides)).